A 173-amino-acid chain; its full sequence is Photosystem I assembly protein Ycf3 (173 aa).

TPR repeat units follow at residues 35–68 (AYIYYREGFAAQNNGDYSEALENYEESLKLEENP), 72–105 (GETLKNMAIIYMSNGDEDRALETYVKALDQNPKQ), and 120–153 (GRSAQQRGLQDESDIWFDKAADVWTKAVRLYPGG).

Belongs to the Ycf3 family.

It is found in the cellular thylakoid membrane. Its function is as follows. Essential for the assembly of the photosystem I (PSI) complex. May act as a chaperone-like factor to guide the assembly of the PSI subunits. The polypeptide is Photosystem I assembly protein Ycf3 (Prochlorococcus marinus (strain MIT 9211)).